The sequence spans 167 residues: Large ribosomal subunit protein uL10 (167 aa).

It belongs to the universal ribosomal protein uL10 family. Part of the ribosomal stalk of the 50S ribosomal subunit. The N-terminus interacts with L11 and the large rRNA to form the base of the stalk. The C-terminus forms an elongated spine to which L12 dimers bind in a sequential fashion forming a multimeric L10(L12)X complex.

Functionally, forms part of the ribosomal stalk, playing a central role in the interaction of the ribosome with GTP-bound translation factors. This is Large ribosomal subunit protein uL10 from Dichelobacter nodosus (strain VCS1703A).